We begin with the raw amino-acid sequence, 104 residues long: Large ribosomal subunit protein bL21 (104 aa).

This sequence belongs to the bacterial ribosomal protein bL21 family. Part of the 50S ribosomal subunit. Contacts protein L20.

This protein binds to 23S rRNA in the presence of protein L20. The polypeptide is Large ribosomal subunit protein bL21 (Gluconacetobacter diazotrophicus (strain ATCC 49037 / DSM 5601 / CCUG 37298 / CIP 103539 / LMG 7603 / PAl5)).